Consider the following 119-residue polypeptide: Large ribosomal subunit protein bL20 (119 aa).

It belongs to the bacterial ribosomal protein bL20 family.

In terms of biological role, binds directly to 23S ribosomal RNA and is necessary for the in vitro assembly process of the 50S ribosomal subunit. It is not involved in the protein synthesizing functions of that subunit. This chain is Large ribosomal subunit protein bL20, found in Gloeobacter violaceus (strain ATCC 29082 / PCC 7421).